Consider the following 310-residue polypeptide: HPr kinase/phosphorylase (310 aa).

Active-site residues include H138 and K159. Residue 153 to 160 (GDSGIGKS) coordinates ATP. Residue S160 participates in Mg(2+) binding. The active-site Proton acceptor; for phosphorylation activity. Proton donor; for dephosphorylation activity is the D177. The interval 201 to 210 (LEIRGVGIID) is important for the catalytic mechanism of both phosphorylation and dephosphorylation. E202 lines the Mg(2+) pocket. R243 is an active-site residue. An important for the catalytic mechanism of dephosphorylation region spans residues 264–269 (PVKTGR).

Belongs to the HPrK/P family. As to quaternary structure, homohexamer. Requires Mg(2+) as cofactor.

The catalysed reaction is [HPr protein]-L-serine + ATP = [HPr protein]-O-phospho-L-serine + ADP + H(+). It carries out the reaction [HPr protein]-O-phospho-L-serine + phosphate + H(+) = [HPr protein]-L-serine + diphosphate. In terms of biological role, catalyzes the ATP- as well as the pyrophosphate-dependent phosphorylation of a specific serine residue in HPr, a phosphocarrier protein of the phosphoenolpyruvate-dependent sugar phosphotransferase system (PTS). HprK/P also catalyzes the pyrophosphate-producing, inorganic phosphate-dependent dephosphorylation (phosphorolysis) of seryl-phosphorylated HPr (P-Ser-HPr). The two antagonistic activities of HprK/P are regulated by several intracellular metabolites, which change their concentration in response to the absence or presence of rapidly metabolisable carbon sources (glucose, fructose, etc.) in the growth medium. Therefore, by controlling the phosphorylation state of HPr, HPrK/P is a sensor enzyme that plays a major role in the regulation of carbon metabolism and sugar transport: it mediates carbon catabolite repression (CCR), and regulates PTS-catalyzed carbohydrate uptake and inducer exclusion. The sequence is that of HPr kinase/phosphorylase from Streptococcus equi subsp. equi (strain 4047).